Reading from the N-terminus, the 1535-residue chain is Putative protein TIC 214 C-terminal part (1535 aa).

Disordered stretches follow at residues 264–283 (ENQKKNGKQPVDTIKNNSND), 312–333 (EQQEEENPEESTGNPGIRSRKA), and 1263–1282 (DYKESDIQKPRTKAQSKNNK).

It belongs to the TIC214 family. In terms of assembly, part of the Tic complex.

It localises to the plastid. Its subcellular location is the chloroplast. Functionally, involved in protein precursor import into chloroplasts. May be part of an intermediate translocation complex acting as a protein-conducting channel at the inner envelope. This chain is Putative protein TIC 214 C-terminal part, found in Piper cenocladum (Ant piper).